A 339-amino-acid chain; its full sequence is Replication factor C subunit 2 (339 aa).

48–55 (YGPPGTGK) is an ATP binding site.

Belongs to the activator 1 small subunits family. Heterotetramer of subunits RFC2, RFC3, RFC4 and RFC5 that can form a complex with RFC1. In terms of tissue distribution, expressed in roots, leaves, shoot apical meristem (SAM), flag leaves and panicles.

It is found in the nucleus. In terms of biological role, may be involved in DNA replication and thus regulate cell proliferation. The polypeptide is Replication factor C subunit 2 (RFC2) (Oryza sativa subsp. japonica (Rice)).